A 266-amino-acid chain; its full sequence is Signal peptidase I (266 aa).

The Cytoplasmic portion of the chain corresponds to 1–20; that stretch reads MQTDNTKSNTNKTAKQEWGS. A helical membrane pass occupies residues 21 to 41; it reads FAFVICIALLIRILIMEPFTV. The Periplasmic segment spans residues 42-266; sequence PTGSMKATIL…IFRNLYNTDA (225 aa). Catalysis depends on residues serine 45 and lysine 108.

This sequence belongs to the peptidase S26 family.

It is found in the cell inner membrane. It catalyses the reaction Cleavage of hydrophobic, N-terminal signal or leader sequences from secreted and periplasmic proteins.. In terms of biological role, complements E.coli mutants temperature-sensitive for LepB function. This Rickettsia rickettsii (strain Sheila Smith) protein is Signal peptidase I (lepB).